The sequence spans 198 residues: Recombination protein RecR (198 aa).

The C4-type zinc finger occupies 57–72 (CEKCNTFTEAQICEVC). In terms of domain architecture, Toprim spans 80–175 (TLLCVVETPA…AVTRLARGVP (96 aa)).

It belongs to the RecR family.

Its function is as follows. May play a role in DNA repair. It seems to be involved in an RecBC-independent recombinational process of DNA repair. It may act with RecF and RecO. This Paraburkholderia xenovorans (strain LB400) protein is Recombination protein RecR.